We begin with the raw amino-acid sequence, 130 residues long: HTH-type transcriptional regulator KmtR (130 aa).

The region spanning 10 to 104 is the HTH arsR-type domain; it reads LPDDQVCLVV…DAVFNAEHAG (95 aa). The segment at residues 44–67 is a DNA-binding region (H-T-H motif); it reads VNELAEQVGKPAPSVSQHLAKLRM. The segment at 110-130 is disordered; that stretch reads HHRAAGGLQSVAKASATKDVG.

Binding to DNA is inhibited by nickel and cobalt ions. Represses expression of Rv2025c and its own expression. Acts by binding to the promoter regions. The polypeptide is HTH-type transcriptional regulator KmtR (kmtR) (Mycobacterium tuberculosis (strain ATCC 25618 / H37Rv)).